A 95-amino-acid chain; its full sequence is Small ribosomal subunit protein bS6 (95 aa).

Belongs to the bacterial ribosomal protein bS6 family.

Functionally, binds together with bS18 to 16S ribosomal RNA. The protein is Small ribosomal subunit protein bS6 of Geobacillus kaustophilus (strain HTA426).